Here is a 354-residue protein sequence, read N- to C-terminus: UPF0421 protein BH2644 (354 aa).

A run of 4 helical transmembrane segments spans residues 22 to 42 (AVCLTTAICMAFNLSPTFAVI), 60 to 80 (LIRLPAAALGAFFAVLSAYFF), 107 to 127 (TLVATLTAVAMIPSTTDHLFA), and 133 to 153 (VAGTSLGIMISTFVNFMILPP).

Belongs to the UPF0421 family.

Its subcellular location is the cell membrane. This chain is UPF0421 protein BH2644, found in Halalkalibacterium halodurans (strain ATCC BAA-125 / DSM 18197 / FERM 7344 / JCM 9153 / C-125) (Bacillus halodurans).